Reading from the N-terminus, the 589-residue chain is Putative adenine deaminase BC_3012 (589 aa).

It belongs to the metallo-dependent hydrolases superfamily. Adenine deaminase family.

It catalyses the reaction adenine + H2O + H(+) = hypoxanthine + NH4(+). The polypeptide is Putative adenine deaminase BC_3012 (Bacillus cereus (strain ATCC 14579 / DSM 31 / CCUG 7414 / JCM 2152 / NBRC 15305 / NCIMB 9373 / NCTC 2599 / NRRL B-3711)).